The following is a 368-amino-acid chain: DNA replication and repair protein RecF (368 aa).

30-37 (GDNGAGKT) lines the ATP pocket.

This sequence belongs to the RecF family.

It is found in the cytoplasm. The RecF protein is involved in DNA metabolism; it is required for DNA replication and normal SOS inducibility. RecF binds preferentially to single-stranded, linear DNA. It also seems to bind ATP. The polypeptide is DNA replication and repair protein RecF (Xanthomonas oryzae pv. oryzae (strain KACC10331 / KXO85)).